Reading from the N-terminus, the 198-residue chain is MSTHLLEQLIDAFRILPGVGQKTAQRMAYHVLEREREGGQRLADVLSRAIEKIGHCTECRDFSETKICAICANYSRDRHQLCVVESPPDRLAIEQATGYRGLYFILQGRLSPLDGIGPHELGLDHLGQRLAAGEVTELIIATNATVEGETTAHYLALLARQHGIRPSRLAQGLPLGGELEYLDRGTLSHAFGTRTEVV.

The segment at 56–71 (CTECRDFSETKICAIC) adopts a C4-type zinc-finger fold. One can recognise a Toprim domain in the interval 79 to 174 (HQLCVVESPP…RPSRLAQGLP (96 aa)).

This sequence belongs to the RecR family.

Its function is as follows. May play a role in DNA repair. It seems to be involved in an RecBC-independent recombinational process of DNA repair. It may act with RecF and RecO. The chain is Recombination protein RecR from Xylella fastidiosa (strain 9a5c).